A 475-amino-acid polypeptide reads, in one-letter code: Putative aldehyde dehydrogenase (475 aa).

NAD(+)-binding positions include 146–147 and 223–224; these read WN and GS. Catalysis depends on Glu-245, which acts as the Proton acceptor. Leu-246 contacts NAD(+). Residue Cys-279 is the Nucleophile of the active site. Glu-379 serves as a coordination point for NAD(+).

The protein belongs to the aldehyde dehydrogenase family.

It catalyses the reaction an aldehyde + NAD(+) + H2O = a carboxylate + NADH + 2 H(+). The sequence is that of Putative aldehyde dehydrogenase from Staphylococcus aureus (strain bovine RF122 / ET3-1).